Reading from the N-terminus, the 334-residue chain is Type IV inositol polyphosphate 5-phosphatase 11 (334 aa).

2 catalytic regions span residues 206-222 (DLTV…QDVS) and 282-297 (KIRV…FKIQ).

It belongs to the inositol polyphosphate 5-phosphatase family. As to expression, expressed ubiquitously.

It localises to the cell membrane. It carries out the reaction a 1,2-diacyl-sn-glycero-3-phospho-(1D-myo-inositol-4,5-bisphosphate) + H2O = a 1,2-diacyl-sn-glycero-3-phospho-(1D-myo-inositol 4-phosphate) + phosphate. It catalyses the reaction a 1,2-diacyl-sn-glycero-3-phospho-(1D-myo-inositol-3,4,5-trisphosphate) + H2O = a 1,2-diacyl-sn-glycero-3-phospho-(1D-myo-inositol-3,4-bisphosphate) + phosphate. Has phosphatase activity toward PtdIns(4,5)P2, and in vitro toward PtdIns(3,5)P2 and PtdIns(3,4,5)P3. Cannot dephosphorylate PtdIns(5)P, Ins(1,4,5)P3 and Ins(1,3,4,5)P4. The chain is Type IV inositol polyphosphate 5-phosphatase 11 from Arabidopsis thaliana (Mouse-ear cress).